The sequence spans 259 residues: Methanethiol S-methyltransferase 2 (259 aa).

The next 5 helical transmembrane spans lie at 5–25, 46–66, 88–108, 115–135, and 182–202; these read LAIL…FLYA, LGEA…QHSV, TYVL…RPIP, SGIA…IAFA, and FLLA…FALA.

It belongs to the nurim family.

Its subcellular location is the membrane. The catalysed reaction is methanethiol + S-adenosyl-L-methionine = dimethyl sulfide + S-adenosyl-L-homocysteine + H(+). Functionally, catalyzes the methylation of methanethiol (MeSH) to yield dimethylsulphide (DMS). This Bradyrhizobium diazoefficiens (strain JCM 10833 / BCRC 13528 / IAM 13628 / NBRC 14792 / USDA 110) protein is Methanethiol S-methyltransferase 2.